Consider the following 615-residue polypeptide: Protein DBF4 homolog B (615 aa).

Residues 43–133 (ARKHPFSGKS…DPKGSHPRPS (91 aa)) enclose the BRCT domain. Disordered stretches follow at residues 93-141 (REVK…DSVP) and 264-293 (FEAP…AHTM). Residues 275 to 284 (HTRESKDGEP) are compositionally biased toward basic and acidic residues. Residues 294–343 (PRRKKGYCECCQEAFEELHVHLQSAQHRSFALEAHLYAEVDRIIAQLSHS) form a DBF4-type zinc finger. The Zn(2+) site is built by C301, C304, H314, and H320. Residues 371-407 (TLHPHQPSHPRAASPRIRKEDSCQASVTQGRAAGQQR) form a disordered region.

As to quaternary structure, forms a complex with CDC7. Note that CDC7 forms distinct complex either with DBF4/DBF4A or DBF4B. Such complexes are stable upon replication stress. Phosphorylated. Widely expressed. Highly expressed in testis.

The protein localises to the nucleus. Its function is as follows. Regulatory subunit for CDC7 which activates its kinase activity thereby playing a central role in DNA replication and cell proliferation. Required for progression of S and M phases. The complex CDC7-DBF4B selectively phosphorylates MCM2 subunit at 'Ser-40' and then is involved in regulating the initiation of DNA replication during cell cycle. This chain is Protein DBF4 homolog B (DBF4B), found in Homo sapiens (Human).